The sequence spans 128 residues: Large ribosomal subunit protein bL17 (128 aa).

It belongs to the bacterial ribosomal protein bL17 family. In terms of assembly, part of the 50S ribosomal subunit. Contacts protein L32.

This Pseudomonas savastanoi pv. phaseolicola (strain 1448A / Race 6) (Pseudomonas syringae pv. phaseolicola (strain 1448A / Race 6)) protein is Large ribosomal subunit protein bL17.